We begin with the raw amino-acid sequence, 308 residues long: tRNA pseudouridine synthase B (308 aa).

D47 (nucleophile) is an active-site residue.

The protein belongs to the pseudouridine synthase TruB family. Type 1 subfamily.

It carries out the reaction uridine(55) in tRNA = pseudouridine(55) in tRNA. In terms of biological role, responsible for synthesis of pseudouridine from uracil-55 in the psi GC loop of transfer RNAs. The chain is tRNA pseudouridine synthase B from Xanthomonas campestris pv. campestris (strain 8004).